The following is a 129-amino-acid chain: Small ribosomal subunit protein eS6 (129 aa).

Residues T53–D88 are disordered.

It belongs to the eukaryotic ribosomal protein eS6 family.

The sequence is that of Small ribosomal subunit protein eS6 (rps6e) from Haloarcula marismortui (strain ATCC 43049 / DSM 3752 / JCM 8966 / VKM B-1809) (Halobacterium marismortui).